Consider the following 124-residue polypeptide: S-adenosylmethionine decarboxylase proenzyme (124 aa).

Residue Ser-63 is the Schiff-base intermediate with substrate; via pyruvic acid of the active site. At Ser-63 the chain carries Pyruvic acid (Ser); by autocatalysis. His-68 (proton acceptor; for processing activity) is an active-site residue. Cys-83 acts as the Proton donor; for catalytic activity in catalysis.

The protein belongs to the prokaryotic AdoMetDC family. Type 1 subfamily. In terms of assembly, heterotetramer of two alpha and two beta chains arranged as a dimer of alpha/beta heterodimers. Pyruvate serves as cofactor. Post-translationally, is synthesized initially as an inactive proenzyme. Formation of the active enzyme involves a self-maturation process in which the active site pyruvoyl group is generated from an internal serine residue via an autocatalytic post-translational modification. Two non-identical subunits are generated from the proenzyme in this reaction, and the pyruvate is formed at the N-terminus of the alpha chain, which is derived from the carboxyl end of the proenzyme. The post-translation cleavage follows an unusual pathway, termed non-hydrolytic serinolysis, in which the side chain hydroxyl group of the serine supplies its oxygen atom to form the C-terminus of the beta chain, while the remainder of the serine residue undergoes an oxidative deamination to produce ammonia and the pyruvoyl group blocking the N-terminus of the alpha chain.

The catalysed reaction is S-adenosyl-L-methionine + H(+) = S-adenosyl 3-(methylsulfanyl)propylamine + CO2. Its pathway is amine and polyamine biosynthesis; S-adenosylmethioninamine biosynthesis; S-adenosylmethioninamine from S-adenosyl-L-methionine: step 1/1. Its function is as follows. Catalyzes the decarboxylation of S-adenosylmethionine to S-adenosylmethioninamine (dcAdoMet), the propylamine donor required for the synthesis of the polyamines spermine and spermidine from the diamine putrescine. In Anoxybacillus flavithermus (strain DSM 21510 / WK1), this protein is S-adenosylmethionine decarboxylase proenzyme.